The sequence spans 141 residues: Cystatin-13 (141 aa).

The first 24 residues, 1–24 (MARFLQTLLFLVIMVEFVSRRVEA), serve as a signal peptide directing secretion. The tract at residues 76 to 80 (QITDS) is secondary area of contact. Disulfide bonds link Cys94–Cys104 and Cys118–Cys138.

The protein belongs to the cystatin family. In terms of tissue distribution, expressed exclusively in testis. Found in spermatagonia, spermatocytes, round spermatids, elongating spermatids and spermatozoa.

It is found in the secreted. The protein localises to the cytoplasm. Functionally, may perform a specialized role during sperm development and maturation. This Mus musculus (Mouse) protein is Cystatin-13.